Reading from the N-terminus, the 475-residue chain is Solute carrier family 46 member 2 (475 aa).

Residues 1 to 23 (MSPEVTCPRRGHLPRFHPRTWVE) lie on the Cytoplasmic side of the membrane. Residues 24 to 44 (PVVASSQVAASLYDAGLLLVV) form a helical membrane-spanning segment. Topologically, residues 45–78 (KASYGTGGSSNHSASPSPRGALEDQQQRAISNFY) are extracellular. A glycan (N-linked (GlcNAc...) asparagine) is linked at asparagine 55. Residues 79 to 99 (IIYNLVVGLSPLLSAYGLGWL) traverse the membrane as a helical segment. The Cytoplasmic segment spans residues 100–108 (SDRYHRKIS). Residues 109–129 (ICMSLLGFLLSRLGLLLKVLL) traverse the membrane as a helical segment. Topologically, residues 130 to 138 (DWPVEVLYG) are extracellular. Residues 139-159 (AAALNGLFGGFSAFWSGVMAL) traverse the membrane as a helical segment. The Cytoplasmic portion of the chain corresponds to 160-172 (GSLGSSEGRRSVR). The helical transmembrane segment at 173–193 (LILIDLMLGLAGFCGSMASGH) threads the bilayer. Residues 194–205 (LFKQMAGHSGQG) are Extracellular-facing. A helical transmembrane segment spans residues 206–226 (LILTACSVSCASFALLYSLLV). Residues 227 to 282 (LKVPESVAKPSQELPAVDTVSGTVGTYRTLDPDQLDQQYAVGHPPSPGKAKPHKTT) are Cytoplasmic-facing. Residues 283 to 303 (IALLFVGAIIYDLAVVGTVDV) traverse the membrane as a helical segment. At 304–320 (IPLFVLREPLGWNQVQV) the chain is on the extracellular side. The chain crosses the membrane as a helical span at residues 321 to 341 (GYGMAAGYTIFITSFLGVLVF). Residues 342–347 (SRCFRD) are Cytoplasmic-facing. The chain crosses the membrane as a helical span at residues 348–368 (TTMIMIGMVSFGSGALLLAFV). The Extracellular segment spans residues 369–370 (KE). Residues 371 to 391 (TYMFYIARAVMLFALIPVTTI) traverse the membrane as a helical segment. Over 392 to 406 (RSAMSKLIKGSSYGK) the chain is Cytoplasmic. The helical transmembrane segment at 407-427 (VFVILQLSLALTGVVTSTLYN) threads the bilayer. Residues 428–435 (KIYQLTMD) lie on the Extracellular side of the membrane. Residues 436–456 (MFVGSCFALSSFLSFLAIIPI) form a helical membrane-spanning segment. At 457–475 (SIVAYKQVPLSPYGDIIEK) the chain is on the cytoplasmic side.

The protein belongs to the major facilitator superfamily. SLC46A family. Glycosylated. As to expression, strongly expressed in the adult thymus. Expressed in spleen, lymph nodes, thymus, PBL, bone marrow and fetal liver. Expressed in monocytes and pre-dendridic cells.

Its subcellular location is the endosome membrane. It is found in the cell membrane. It catalyses the reaction N-acetyl-beta-D-glucosaminyl-(1-&gt;4)-1,6-anhydro-N-acetyl-beta-D-muramoyl-L-alanyl-gamma-D-glutamyl-meso-2,6-diaminopimeloyl-D-alanine(out) + n H(+)(out) = N-acetyl-beta-D-glucosaminyl-(1-&gt;4)-1,6-anhydro-N-acetyl-beta-D-muramoyl-L-alanyl-gamma-D-glutamyl-meso-2,6-diaminopimeloyl-D-alanine(in) + n H(+)(in). The enzyme catalyses L-alanyl-gamma-D-glutamyl-meso-2,6-diaminopimelate(out) + n H(+)(out) = L-alanyl-gamma-D-glutamyl-meso-2,6-diaminopimelate(in) + n H(+)(in). It carries out the reaction N-acetyl-D-muramoyl-L-alanyl-D-isoglutamine(out) + n H(+)(out) = N-acetyl-D-muramoyl-L-alanyl-D-isoglutamine(in) + n H(+)(in). The catalysed reaction is 2',3'-cGAMP(out) + n H(+)(out) = 2',3'-cGAMP(in) + n H(+)(in). It catalyses the reaction 3',3'-cGAMP(out) + n H(+)(out) = 3',3'-cGAMP(in) + n H(+)(in). Functionally, proton-coupled transporter that delivers pathogen-associated or danger-associated molecular patterns to cytosolic pattern recognition receptors as part of the innate immune response to microbes or tissue injury. Has selectivity toward muropeptides that contain the amino acid diaminopimelic acid (DAP-type peptidoglycan muropeptides) including Tri-DAP and tracheal toxin (TCT), common in Gram-negative bacteria and Gram-positive bacilli. In the context of immune recognition of skin microbiota, shuttles bacterial muropeptides across the endolysosomal membranes into the cytosol for recognition by NOD1, triggering MYD88-dependent secretion of IL1A and neutrophil recruitment in a pyroptosis-type inflammatory process. To a lesser extent and redundantly, transports muramyl dipeptides derived from most bacterial proteoglycans, eliciting NOD2 receptor activation and downstream inflammatory responses. Postulated to function as a dominant importer of cyclic GMP-AMP dinucleotides (cGAMPs) in monocyte and macrophage cell lineages. Selectively imports cGAMPs derived from pathogenic bacteria such as 3'3'-cGAMP thus providing for differential immune recognition of pathogenic versus commensal bacteria. During tumorigenesis may transport extracellular tumor-derived 2'3'-cGAMP across the plasma membrane of M1-polarized macrophages to activate the anti-tumoral stimulator of interferon genes (STING) pathway. The transport mechanism, its electrogenicity and stoichiometry remain to be elucidated. This chain is Solute carrier family 46 member 2, found in Homo sapiens (Human).